A 350-amino-acid chain; its full sequence is Phosphoribosylformylglycinamidine cyclo-ligase (350 aa).

This sequence belongs to the AIR synthase family.

The protein resides in the cytoplasm. The catalysed reaction is 2-formamido-N(1)-(5-O-phospho-beta-D-ribosyl)acetamidine + ATP = 5-amino-1-(5-phospho-beta-D-ribosyl)imidazole + ADP + phosphate + H(+). It functions in the pathway purine metabolism; IMP biosynthesis via de novo pathway; 5-amino-1-(5-phospho-D-ribosyl)imidazole from N(2)-formyl-N(1)-(5-phospho-D-ribosyl)glycinamide: step 2/2. The protein is Phosphoribosylformylglycinamidine cyclo-ligase of Pseudoalteromonas translucida (strain TAC 125).